A 192-amino-acid chain; its full sequence is Orotate phosphoribosyltransferase (192 aa).

Residues R84, K88, and 110-118 (DDVLTTGNS) contribute to the 5-phospho-alpha-D-ribose 1-diphosphate site. Orotate contacts are provided by T114 and R142.

This sequence belongs to the purine/pyrimidine phosphoribosyltransferase family. PyrE subfamily. Homodimer. Requires Mg(2+) as cofactor.

It catalyses the reaction orotidine 5'-phosphate + diphosphate = orotate + 5-phospho-alpha-D-ribose 1-diphosphate. It functions in the pathway pyrimidine metabolism; UMP biosynthesis via de novo pathway; UMP from orotate: step 1/2. In terms of biological role, catalyzes the transfer of a ribosyl phosphate group from 5-phosphoribose 1-diphosphate to orotate, leading to the formation of orotidine monophosphate (OMP). This Pyrobaculum calidifontis (strain DSM 21063 / JCM 11548 / VA1) protein is Orotate phosphoribosyltransferase.